A 338-amino-acid polypeptide reads, in one-letter code: DNA-directed RNA polymerase subunit alpha (338 aa).

The tract at residues Met1–Glu233 is alpha N-terminal domain (alpha-NTD). The alpha C-terminal domain (alpha-CTD) stretch occupies residues Ile266–Asn338.

This sequence belongs to the RNA polymerase alpha chain family. In plastids the minimal PEP RNA polymerase catalytic core is composed of four subunits: alpha, beta, beta', and beta''. When a (nuclear-encoded) sigma factor is associated with the core the holoenzyme is formed, which can initiate transcription.

It localises to the plastid. The protein resides in the chloroplast. The catalysed reaction is RNA(n) + a ribonucleoside 5'-triphosphate = RNA(n+1) + diphosphate. Its function is as follows. DNA-dependent RNA polymerase catalyzes the transcription of DNA into RNA using the four ribonucleoside triphosphates as substrates. This Nandina domestica (Heavenly bamboo) protein is DNA-directed RNA polymerase subunit alpha.